A 160-amino-acid polypeptide reads, in one-letter code: Lipoprotein signal peptidase (160 aa).

3 helical membrane-spanning segments follow: residues 13 to 33 (IYITTIIFILILDISSKHLII), 72 to 92 (WFLSTVSILTILVMTRIITKL), and 104 to 124 (SLIIAGATGNLIDRIFYGFVV). Active-site residues include Asp125 and Asp143. A helical membrane pass occupies residues 134–154 (WHFATFNIADCSIFIGIIILM).

This sequence belongs to the peptidase A8 family.

It is found in the cell inner membrane. The enzyme catalyses Release of signal peptides from bacterial membrane prolipoproteins. Hydrolyzes -Xaa-Yaa-Zaa-|-(S,diacylglyceryl)Cys-, in which Xaa is hydrophobic (preferably Leu), and Yaa (Ala or Ser) and Zaa (Gly or Ala) have small, neutral side chains.. It participates in protein modification; lipoprotein biosynthesis (signal peptide cleavage). Its function is as follows. This protein specifically catalyzes the removal of signal peptides from prolipoproteins. The protein is Lipoprotein signal peptidase of Buchnera aphidicola subsp. Acyrthosiphon pisum (strain Tuc7).